A 205-amino-acid polypeptide reads, in one-letter code: Holliday junction branch migration complex subunit RuvA (205 aa).

The segment at M1–R64 is domain I. The interval S65–V143 is domain II. The segment at A144–S153 is flexible linker. The tract at residues S153–K205 is domain III.

It belongs to the RuvA family. As to quaternary structure, homotetramer. Forms an RuvA(8)-RuvB(12)-Holliday junction (HJ) complex. HJ DNA is sandwiched between 2 RuvA tetramers; dsDNA enters through RuvA and exits via RuvB. An RuvB hexamer assembles on each DNA strand where it exits the tetramer. Each RuvB hexamer is contacted by two RuvA subunits (via domain III) on 2 adjacent RuvB subunits; this complex drives branch migration. In the full resolvosome a probable DNA-RuvA(4)-RuvB(12)-RuvC(2) complex forms which resolves the HJ.

The protein resides in the cytoplasm. Functionally, the RuvA-RuvB-RuvC complex processes Holliday junction (HJ) DNA during genetic recombination and DNA repair, while the RuvA-RuvB complex plays an important role in the rescue of blocked DNA replication forks via replication fork reversal (RFR). RuvA specifically binds to HJ cruciform DNA, conferring on it an open structure. The RuvB hexamer acts as an ATP-dependent pump, pulling dsDNA into and through the RuvAB complex. HJ branch migration allows RuvC to scan DNA until it finds its consensus sequence, where it cleaves and resolves the cruciform DNA. The protein is Holliday junction branch migration complex subunit RuvA of Rhodopseudomonas palustris (strain BisB18).